Reading from the N-terminus, the 131-residue chain is Transcription antitermination protein NusB (131 aa).

This sequence belongs to the NusB family.

Involved in transcription antitermination. Required for transcription of ribosomal RNA (rRNA) genes. Binds specifically to the boxA antiterminator sequence of the ribosomal RNA (rrn) operons. The polypeptide is Transcription antitermination protein NusB (Campylobacter curvus (strain 525.92)).